We begin with the raw amino-acid sequence, 457 residues long: D-hydantoinase (457 aa).

The Zn(2+) site is built by histidine 57 and histidine 59. Serine 69 is modified (phosphoserine). Residue lysine 148 participates in Zn(2+) binding. Position 148 is an N6-carboxylysine (lysine 148). A substrate-binding site is contributed by tyrosine 153. Zn(2+) contacts are provided by histidine 181 and histidine 237. Residue threonine 286 participates in substrate binding. Aspartate 313 provides a ligand contact to Zn(2+). Asparagine 335 serves as a coordination point for substrate.

It belongs to the metallo-dependent hydrolases superfamily. Hydantoinase/dihydropyrimidinase family. As to quaternary structure, homodimer and homotetramer. Zn(2+) is required as a cofactor. Carboxylation allows a single lysine to coordinate two zinc ions.

Catalyzes the stereospecific hydrolysis of the cyclic amide bond of D-hydantoin derivatives. The polypeptide is D-hydantoinase (hyuA) (Ralstonia pickettii (Burkholderia pickettii)).